The following is a 320-amino-acid chain: Solute carrier family 25 member 33 (320 aa).

Solcar repeat units follow at residues 9–118 (ENTL…AKEQ), 126–213 (NSNT…LKKC), and 231–315 (SGFF…IVYL). 6 helical membrane passes run 12 to 32 (LLHLFAGGCGGTVGAIFTCPL), 49 to 65 (VYYPQVHLGTISGAGMV), 121 to 141 (GIFVPNSNTVHILSAGSAAFV), 190 to 210 (LTASYAGISETIICFAIYESL), 233 to 253 (FFGLMAAAAVSKGCASCIAYP), and 298 to 318 (QIPNTAIVLSTYEFIVYLLGE).

It belongs to the mitochondrial carrier (TC 2.A.29) family.

It localises to the mitochondrion inner membrane. The enzyme catalyses UTP(in) + UDP(out) = UTP(out) + UDP(in). The catalysed reaction is dUTP(out) + UTP(in) = dUTP(in) + UTP(out). It catalyses the reaction 5-methyl-UTP(out) + UTP(in) = 5-methyl-UTP(in) + UTP(out). It carries out the reaction 5-methyl-UDP(out) + UTP(in) = 5-methyl-UDP(in) + UTP(out). The enzyme catalyses UTP(in) + CTP(out) = UTP(out) + CTP(in). The catalysed reaction is CDP(out) + UTP(in) = CDP(in) + UTP(out). It catalyses the reaction dCTP(out) + UTP(in) = dCTP(in) + UTP(out). It carries out the reaction dCDP(out) + UTP(in) = dCDP(in) + UTP(out). The enzyme catalyses UTP(in) + GTP(out) = UTP(out) + GTP(in). The catalysed reaction is UTP(in) + GDP(out) = UTP(out) + GDP(in). It catalyses the reaction dGTP(out) + UTP(in) = dGTP(in) + UTP(out). It carries out the reaction dGDP(out) + UTP(in) = dGDP(in) + UTP(out). The enzyme catalyses ITP(out) + UTP(in) = ITP(in) + UTP(out). Mitochondrial transporter that imports/exports pyrimidine nucleotides into and from mitochondria. Selectively transports uridine, thymidine, guanosine, cytosine and inosine (deoxy)nucleoside di- and triphosphates by an antiport mechanism. May import (deoxy)nucleoside triphosphates in exchange for intramitochondrial (deoxy)nucleoside diphosphates, thus providing precursors necessary for de novo synthesis of mitochondrial DNA and RNA while exporting products of their catabolism. Participates in mitochondrial genome maintenance, regulation of mitochondrial membrane potential and mitochondrial respiration. Upon INS or IGF1 stimulation regulates cell growth and proliferation by controlling mitochondrial DNA replication and transcription, the ratio of mitochondria-to nuclear-encoded components of the electron transport chain resulting in control of mitochondrial ROS production. Participates in dendritic cell endocytosis and may associate with mitochondrial oxidative phosphorylation. The polypeptide is Solute carrier family 25 member 33 (Slc25a33) (Mus musculus (Mouse)).